The following is a 203-amino-acid chain: Cilia- and flagella-associated protein 20 (203 aa).

It belongs to the CFAP20 family.

The protein resides in the nucleus. It localises to the cytoplasm. It is found in the cytoskeleton. Its subcellular location is the microtubule organizing center. The protein localises to the centrosome. The protein resides in the centriole. It localises to the cilium basal body. It is found in the cilium axoneme. Functionally, cilium- and flagellum-specific protein that plays a role in axonemal structure organization and motility. Microtubule inner protein (MIP) part of the dynein-decorated doublet microtubules (DMTs) in cilia axoneme, which is required for motile cilia beating. Involved in the regulation of the size and morphology of cilia. Required for axonemal microtubules polyglutamylation. The chain is Cilia- and flagella-associated protein 20 from Caenorhabditis elegans.